The following is a 592-amino-acid chain: Thiol:disulfide interchange protein DsbD (592 aa).

A signal peptide spans 1-19; sequence MKLIASFSIFMLMSIWSFA. Intrachain disulfides connect Cys-130-Cys-136 and Cys-204-Cys-326. 8 helical membrane passes run 186–206, 229–249, 265–285, 318–338, 345–365, 379–399, 406–426, and 440–460; these read IWVL…PCVF, FVLS…LGLV, IILG…FGAW, ISGL…LLYI, LLGF…LILF, WMNI…LMFV, MATD…FYVM, and ALVI…TIFG. Residues 443–592 form the Thioredoxin domain; that stretch reads IFIGLFASAM…AFAAHAKNIL (150 aa). A disulfide bridge links Cys-508 with Cys-511.

This sequence belongs to the thioredoxin family. DsbD subfamily.

The protein resides in the cell inner membrane. It carries out the reaction [protein]-dithiol + NAD(+) = [protein]-disulfide + NADH + H(+). The enzyme catalyses [protein]-dithiol + NADP(+) = [protein]-disulfide + NADPH + H(+). In terms of biological role, required to facilitate the formation of correct disulfide bonds in some periplasmic proteins and for the assembly of the periplasmic c-type cytochromes. Acts by transferring electrons from cytoplasmic thioredoxin to the periplasm. This transfer involves a cascade of disulfide bond formation and reduction steps. The polypeptide is Thiol:disulfide interchange protein DsbD (Pseudoalteromonas atlantica (strain T6c / ATCC BAA-1087)).